A 261-amino-acid polypeptide reads, in one-letter code: 3-hydroxyacyl-CoA dehydrogenase type-2 (261 aa).

N-acetylalanine is present on A2. NAD(+)-binding residues include S20, L22, and D41. At K53 the chain carries N6-acetyllysine; alternate. An N6-succinyllysine; alternate modification is found at K53. The NAD(+) site is built by D64 and V65. Residue K69 is modified to N6-acetyllysine. Position 91 (C91) interacts with NAD(+). 2 positions are modified to N6-acetyllysine: K99 and K105. Position 155 (S155) interacts with substrate. The NAD(+) site is built by Y168, K172, F201, and T203. The active-site Proton acceptor is the Y168. Residue K212 is modified to N6-acetyllysine; alternate. K212 carries the post-translational modification N6-succinyllysine; alternate.

The protein belongs to the short-chain dehydrogenases/reductases (SDR) family. In terms of assembly, homotetramer. Component of mitochondrial ribonuclease P, a complex composed of TRMT10C/MRPP1, HSD17B10/MRPP2 and PRORP/MRPP3. Interacts with TRMT10C/MRPP1; forming the MRPP1-MRPP2 subcomplex of the mitochondrial ribonuclease P complex. In terms of tissue distribution, ubiquitously expressed in normal tissues but is overexpressed in neurons affected in AD.

Its subcellular location is the mitochondrion. The protein localises to the mitochondrion matrix. It localises to the mitochondrion nucleoid. The enzyme catalyses a (3S)-3-hydroxyacyl-CoA + NAD(+) = a 3-oxoacyl-CoA + NADH + H(+). It catalyses the reaction (2S,3S)-3-hydroxy-2-methylbutanoyl-CoA + NAD(+) = 2-methyl-3-oxobutanoyl-CoA + NADH + H(+). It carries out the reaction testosterone + NAD(+) = androst-4-ene-3,17-dione + NADH + H(+). The catalysed reaction is 5alpha-androstane-3alpha,17beta-diol + NAD(+) = 17beta-hydroxy-5alpha-androstan-3-one + NADH + H(+). The enzyme catalyses 17beta-estradiol + NAD(+) = estrone + NADH + H(+). It catalyses the reaction cholate + NAD(+) = 3alpha,12alpha-dihydroxy-7-oxo-5beta-cholanate + NADH + H(+). It carries out the reaction (3S)-3-hydroxybutanoyl-CoA + NAD(+) = acetoacetyl-CoA + NADH + H(+). The catalysed reaction is (3S)-hydroxyoctanoyl-CoA + NAD(+) = 3-oxooctanoyl-CoA + NADH + H(+). The enzyme catalyses (3S)-hydroxyhexadecanoyl-CoA + NAD(+) = 3-oxohexadecanoyl-CoA + NADH + H(+). It catalyses the reaction 17beta-hydroxy-5alpha-androstan-3-one + NAD(+) = 5alpha-androstan-3,17-dione + NADH + H(+). It carries out the reaction 5alpha-pregnan-20beta-ol-3-one + NAD(+) = 5alpha-pregnane-3,20-dione + NADH + H(+). The catalysed reaction is 3alpha-hydroxy-5alpha-pregnan-20-one + NAD(+) = 5alpha-pregnane-3,20-dione + NADH + H(+). The enzyme catalyses cortisone + NAD(+) = 17alpha-hydroxypregn-4-en-3,11,20-trione-21-al + NADH + H(+). It catalyses the reaction 11-dehydrocorticosterone + NAD(+) = pregn-4-ene-3,11,20,21-tetraone + NADH + H(+). It carries out the reaction cortisol + NAD(+) = 11beta,17alpha-dihydroxypregn-4-ene-3,20,21-trione + NADH + H(+). The catalysed reaction is chenodeoxycholate + NAD(+) = 7-oxolithocholate + NADH + H(+). The enzyme catalyses ursodeoxycholate + NAD(+) = 7-oxolithocholate + NADH + H(+). It catalyses the reaction 3beta,7beta-dihydroxy-5beta-cholan-24-oate + NAD(+) = 3beta-hydroxy-7-oxo-5beta-cholan-24-oate + NADH + H(+). The protein operates within amino-acid degradation; L-isoleucine degradation. It participates in lipid metabolism; fatty acid beta-oxidation. Its pathway is steroid metabolism. It functions in the pathway lipid metabolism; bile acid biosynthesis. The phospholipase C-like activity toward cardiolipin is inhibited by amyloid-beta peptide. Functionally, mitochondrial dehydrogenase involved in pathways of fatty acid, branched-chain amino acid and steroid metabolism. Acts as (S)-3-hydroxyacyl-CoA dehydrogenase in mitochondrial fatty acid beta-oxidation, a major degradation pathway of fatty acids. Catalyzes the third step in the beta-oxidation cycle, namely the reversible conversion of (S)-3-hydroxyacyl-CoA to 3-ketoacyl-CoA. Preferentially accepts straight medium- and short-chain acyl-CoA substrates with highest efficiency for (3S)-hydroxybutanoyl-CoA. Acts as 3-hydroxy-2-methylbutyryl-CoA dehydrogenase in branched-chain amino acid catabolic pathway. Catalyzes the oxidation of 3-hydroxy-2-methylbutanoyl-CoA into 2-methyl-3-oxobutanoyl-CoA, a step in isoleucine degradation pathway. Has hydroxysteroid dehydrogenase activity toward steroid hormones and bile acids. Catalyzes the oxidation of 3alpha-, 17beta-, 20beta- and 21-hydroxysteroids and 7alpha- and 7beta-hydroxy bile acids. Oxidizes allopregnanolone/brexanolone at the 3alpha-hydroxyl group, which is known to be critical for the activation of gamma-aminobutyric acid receptors (GABAARs) chloride channel. Has phospholipase C-like activity toward cardiolipin and its oxidized species. Likely oxidizes the 2'-hydroxyl in the head group of cardiolipin to form a ketone intermediate that undergoes nucleophilic attack by water and fragments into diacylglycerol, dihydroxyacetone and orthophosphate. Has higher affinity for cardiolipin with oxidized fatty acids and may degrade these species during the oxidative stress response to protect cells from apoptosis. By interacting with intracellular amyloid-beta, it may contribute to the neuronal dysfunction associated with Alzheimer disease (AD). Essential for structural and functional integrity of mitochondria. In addition to mitochondrial dehydrogenase activity, moonlights as a component of mitochondrial ribonuclease P, a complex that cleaves tRNA molecules in their 5'-ends. Together with TRMT10C/MRPP1, forms a subcomplex of the mitochondrial ribonuclease P, named MRPP1-MRPP2 subcomplex, which displays functions that are independent of the ribonuclease P activity. The MRPP1-MRPP2 subcomplex catalyzes the formation of N(1)-methylguanine and N(1)-methyladenine at position 9 (m1G9 and m1A9, respectively) in tRNAs; HSD17B10/MRPP2 acting as a non-catalytic subunit. The MRPP1-MRPP2 subcomplex also acts as a tRNA maturation platform: following 5'-end cleavage by the mitochondrial ribonuclease P complex, the MRPP1-MRPP2 subcomplex enhances the efficiency of 3'-processing catalyzed by ELAC2, retains the tRNA product after ELAC2 processing and presents the nascent tRNA to the mitochondrial CCA tRNA nucleotidyltransferase TRNT1 enzyme. Associates with mitochondrial DNA complexes at the nucleoids to initiate RNA processing and ribosome assembly. In Homo sapiens (Human), this protein is 3-hydroxyacyl-CoA dehydrogenase type-2 (HSD17B10).